The primary structure comprises 88 residues: MEKKEFHIVAETGIHARPATLLVQTASKFNSDINLEYKGKSVNLKSIMGVMSLGVGQGSDVTITVDGADEAEGMAAIVETLQKEGLAE.

The HPr domain occupies 1-88; the sequence is MEKKEFHIVA…ETLQKEGLAE (88 aa). The active-site Pros-phosphohistidine intermediate is the histidine 15. Phosphoserine; by HPrK/P is present on serine 46.

This sequence belongs to the HPr family. As to quaternary structure, monomer.

The protein resides in the cytoplasm. Phosphorylation on Ser-46 inhibits the phosphoryl transfer from enzyme I to HPr. Its function is as follows. General (non sugar-specific) component of the phosphoenolpyruvate-dependent sugar phosphotransferase system (sugar PTS). This major carbohydrate active-transport system catalyzes the phosphorylation of incoming sugar substrates concomitantly with their translocation across the cell membrane. The phosphoryl group from phosphoenolpyruvate (PEP) is transferred to the phosphoryl carrier protein HPr by enzyme I. Phospho-HPr then transfers it to the PTS EIIA domain. P-Ser-HPr interacts with the catabolite control protein A (CcpA), forming a complex that binds to DNA at the catabolite response elements cre, operator sites preceding a large number of catabolite-regulated genes. Thus, P-Ser-HPr is a corepressor in carbon catabolite repression (CCR), a mechanism that allows bacteria to coordinate and optimize the utilization of available carbon sources. P-Ser-HPr also plays a role in inducer exclusion, in which it probably interacts with several non-PTS permeases and inhibits their transport activity. This Enterococcus faecalis (strain ATCC 700802 / V583) protein is Phosphocarrier protein HPr (ptsH).